The following is a 317-amino-acid chain: Putative 2-hydroxyacid dehydrogenase SE_1879 (317 aa).

Residues 155–156, 234–236, and Asp260 contribute to the NAD(+) site; these read EI and AGR. Arg236 is an active-site residue. Residue Glu265 is part of the active site. The active-site Proton donor is His283. 283-286 is a binding site for NAD(+); sequence HIGN.

Belongs to the D-isomer specific 2-hydroxyacid dehydrogenase family.

This is Putative 2-hydroxyacid dehydrogenase SE_1879 from Staphylococcus epidermidis (strain ATCC 12228 / FDA PCI 1200).